A 418-amino-acid polypeptide reads, in one-letter code: MEEVPPYSLSSTLFQQEEQSGVTYRIPALLYLPPTHTFLAFAEKRTSVRDEDAACLVLRRGLMKGRSVQWGPQRLLMEATLPGHRTMNPCPVWEKNTGRVYLFFICVRGHVTERCQIVWGKNAARLCFLCSEDAGCSWGEVKDLTEEVIGSEVKRWATFAVGPGHGIQLHSGRLIIPAYAYYVSRWFLCFACSVKPHSLMIYSDDFGVTWHHGKFIEPQVTGECQVAEVAGTAGNPVLYCSARTPSRFRAEAFSTDSGGCFQKPTLNPQLHEPRTGCQGSVVSFRPLKMPNTYQDSIGKGAPATQKCPLLDSPLEVEKGAETPSATWLLYSHPTSKRKRINLGIYYNRNPLEVNCWSRPWILNRGPSGYSDLAVVEEQDLVACLFECGEKNEYERIDFCLFSDHEVLSCEDCTSPSSD.

The short motif at 24–27 (YRIP) is the FRIP motif element. Positions 25 and 45 each coordinate substrate. Catalysis depends on aspartate 50, which acts as the Proton acceptor. The stretch at 129–140 (LCSEDAGCSWGE) is one BNR 1 repeat. Substrate contacts are provided by tyrosine 179 and tyrosine 181. The BNR 2 repeat unit spans residues 203–214 (SDDFGVTWHHGK). Substrate-binding residues include glutamate 223 and arginine 243. The BNR 3 repeat unit spans residues 254-265 (STDSGGCFQKPT). A Phosphoserine modification is found at serine 312. Arginine 339 contacts substrate. Tyrosine 369 functions as the Nucleophile in the catalytic mechanism. Glutamate 386 is an active-site residue.

This sequence belongs to the glycosyl hydrolase 33 family. In terms of assembly, interacts with CAV1; this interaction enhances NEU3 sialidase activity within caveola. Interacts with EGFR; this interaction mediates desialylation of EGFR and enhances downstream signaling. Palmitoylated; may regulate intracellular trafficking and anchorage to plasma membrane and endomembranes. Expressed in heart, brain and cerebral cortex.

The protein localises to the cell membrane. The protein resides in the membrane. It is found in the caveola. Its subcellular location is the early endosome membrane. It localises to the recycling endosome membrane. The protein localises to the lysosome membrane. It catalyses the reaction Hydrolysis of alpha-(2-&gt;3)-, alpha-(2-&gt;6)-, alpha-(2-&gt;8)- glycosidic linkages of terminal sialic acid residues in oligosaccharides, glycoproteins, glycolipids, colominic acid and synthetic substrates.. The catalysed reaction is a ganglioside GD1a + H2O = a ganglioside GM1 + N-acetylneuraminate. It carries out the reaction a ganglioside GD1a (d18:1(4E)) + H2O = a ganglioside GM1 (d18:1(4E)) + N-acetylneuraminate. The enzyme catalyses a ganglioside GD1b + H2O = a ganglioside GM1 + N-acetylneuraminate. It catalyses the reaction a ganglioside GD1b (d18:1(4E)) + H2O = a ganglioside GM1 (d18:1(4E)) + N-acetylneuraminate. The catalysed reaction is a ganglioside GD3 + H2O = a ganglioside GM3 + N-acetylneuraminate. It carries out the reaction a ganglioside GD3 (d18:1(4E)) + H2O = a ganglioside GM3 (d18:1(4E)) + N-acetylneuraminate. The enzyme catalyses a ganglioside GM3 + H2O = a beta-D-galactosyl-(1-&gt;4)-beta-D-glucosyl-(1&lt;-&gt;1)-ceramide + N-acetylneuraminate. It catalyses the reaction a ganglioside GM1 + H2O = a ganglioside GA1 + N-acetylneuraminate. The catalysed reaction is a ganglioside GM1 (d18:1(4E)) + H2O = a ganglioside GA1 (d18:1(4E)) + N-acetylneuraminate. It carries out the reaction a ganglioside GM2 (d18:1(4E)) + H2O = a ganglioside GA2 (d18:1(4E)) + N-acetylneuraminate. The enzyme catalyses a ganglioside GM3 (d18:1(4E)) + H2O = a beta-D-Gal-(1-&gt;4)-beta-D-Glc-(1&lt;-&gt;1)-Cer(d18:1(4E)) + N-acetylneuraminate. It catalyses the reaction a ganglioside GT1b + H2O = a ganglioside GD1b + N-acetylneuraminate. Its function is as follows. Exo-alpha-sialidase that catalyzes the hydrolytic cleavage of the terminal sialic acid (N-acetylneuraminic acid, Neu5Ac) of a glycan moiety in the catabolism of glycolipids, glycoproteins and oligosacharides. Displays high catalytic efficiency for gangliosides including alpha-(2-&gt;3)-sialylated GD1a and GM3 and alpha-(2-&gt;8)-sialylated GD3. Plays a role in the regulation of transmembrane signaling through the modulation of ganglioside content of the lipid bilayer and by direct interaction with signaling receptors, such as EGFR. Desialylates EGFR and activates downstream signaling in proliferating cells. Contributes to clathrin-mediated endocytosis by regulating sorting of endocytosed receptors to early and recycling endosomes. The polypeptide is Sialidase-3 (Neu3) (Mus musculus (Mouse)).